A 245-amino-acid polypeptide reads, in one-letter code: Probable proteasome subunit alpha type-2 (245 aa).

Belongs to the peptidase T1A family. The 26S proteasome consists of a 20S proteasome core and two 19S regulatory subunits. The 20S proteasome core is composed of 28 subunits that are arranged in four stacked rings, resulting in a barrel-shaped structure. The two end rings are each formed by seven alpha subunits, and the two central rings are each formed by seven beta subunits. The catalytic chamber with the active sites is on the inside of the barrel.

The protein localises to the cytoplasm. Its subcellular location is the nucleus. Its function is as follows. The proteasome is a multicatalytic proteinase complex which is characterized by its ability to cleave peptides with Arg, Phe, Tyr, Leu, and Glu adjacent to the leaving group at neutral or slightly basic pH. The proteasome has an ATP-dependent proteolytic activity. The sequence is that of Probable proteasome subunit alpha type-2 (pre8) from Schizosaccharomyces pombe (strain 972 / ATCC 24843) (Fission yeast).